Reading from the N-terminus, the 79-residue chain is Hematopoietic cell signal transducer (79 aa).

Positions 1–18 (MAPPGGILFLLLLPVAAA) are cleaved as a signal peptide. Residues 19-35 (QVTSGSCSGCGPLSLPL) lie on the Extracellular side of the membrane. Residues 36 to 56 (LAGLVAADAVVSLLIVVGVFV) form a helical membrane-spanning segment. The Cytoplasmic portion of the chain corresponds to 57-79 (CGRPRSRPTQEDGKIYINMPGRG). Tyr-72 is modified (phosphotyrosine). A GRB2 binding site region spans residues 72–74 (YIN). The segment at 72-75 (YINM) is PIK3R1 binding site.

Belongs to the DAP10 family. As to quaternary structure, homodimer; Disulfide-linked. Heterohexamer composed of four subunits of HCST/DAP10 and two subunits of KLRK1. Interacts (via transmembrane domain) with KLRK1 (via transmembrane domain); the interaction is required for KLRK1 NK cell surface and induces NK cell-mediated cytotoxicity. Interacts with PIK3R1 and GRB2. Interacts with CLEC5A. Forms an CLEC5A/TYROBP/HCST trimolecular complex depending almost solely on TYROBP. Interacts with KLRK1. Interacts with CD300H. Phosphorylated; PIK3R1 and GRB2 associate specifically with tyrosine-phosphorylated HCST. Post-translationally, O-glycosylated. In terms of tissue distribution, expressed predominantly in lymphohematopoietic tissues.

It is found in the membrane. Its function is as follows. Transmembrane adapter protein which associates with KLRK1 to form an activation receptor KLRK1-HCST in lymphoid and myeloid cells; this receptor plays a major role in triggering cytotoxicity against target cells expressing cell surface ligands such as MHC class I chain-related MICA and MICB, and UL16-binding proteins (ULBPs); these ligands are up-regulated by stress conditions and pathological state such as viral infection and tumor transformation. Functions as a docking site for PI3-kinase PIK3R1 and GRB2. Interaction of ULBPs with KLRK1-HCST triggers calcium mobilization and activation of the PIK3R1, MAP2K/ERK, and JAK2/STAT5 signaling pathways. Both PIK3R1 and GRB2 are required for full KLRK1-HCST-mediated activation and ultimate killing of target cells. In NK cells, KLRK1-HCST signaling directly induces cytotoxicity and enhances cytokine production initiated via DAP12/TYROBP-associated receptors. In T-cells, it provides primarily costimulation for TCR-induced signals. KLRK1-HCST receptor plays a role in immune surveillance against tumors and is required for cytolysis of tumors cells; indeed, melanoma cells that do not express KLRK1 ligands escape from immune surveillance mediated by NK cells. The sequence is that of Hematopoietic cell signal transducer (HCST) from Sus scrofa (Pig).